Reading from the N-terminus, the 383-residue chain is Protein COS7 (383 aa).

The Cytoplasmic portion of the chain corresponds to 1-42 (MKENEVKDEKSVDVLSFKQLESQKIVLPQDLFRSSFTWFCYE). A helical membrane pass occupies residues 43–63 (IYKSLAFRIWMLLWLPLSVWW). The Extracellular portion of the chain corresponds to 64-72 (KLSNNCIYP). Residues 73–93 (LIVSLLVLFLGPIFVLVICGL) form a helical membrane-spanning segment. Topologically, residues 94-232 (SRKRSLSKQL…RSKLTWFLKR (139 aa)) are cytoplasmic. Residues 233–253 (IFTIYSLPLWLAFLNCICVSQ) traverse the membrane as a helical segment. Residue histidine 254 is a topological domain, extracellular. The helical transmembrane segment at 255–275 (FCLAFRILCPGLFFLMMVWLF) threads the bilayer. Over 276-383 (QNMRTTALLV…SRNEESLMKK (108 aa)) the chain is Cytoplasmic.

It belongs to the DUP/COS family.

The protein resides in the membrane. This Saccharomyces cerevisiae (strain ATCC 204508 / S288c) (Baker's yeast) protein is Protein COS7 (COS7).